A 295-amino-acid polypeptide reads, in one-letter code: GTPase Era (295 aa).

The Era-type G domain maps to 3–170 (KSGFVTIVGR…VDLMKTELPE (168 aa)). Residues 11-18 (GRPNVGKS) form a G1 region. 11 to 18 (GRPNVGKS) provides a ligand contact to GTP. Residues 37–41 (QTTRN) are G2. The G3 stretch occupies residues 58–61 (DTPG). GTP contacts are provided by residues 58-62 (DTPGI) and 120-123 (NKID). The segment at 120 to 123 (NKID) is G4. Residues 149-151 (IAA) are G5. Residues 201 to 278 (LRDEVPHGIA…NVKIWVKVRK (78 aa)) form the KH type-2 domain.

This sequence belongs to the TRAFAC class TrmE-Era-EngA-EngB-Septin-like GTPase superfamily. Era GTPase family. Monomer.

The protein localises to the cytoplasm. It localises to the cell membrane. Its function is as follows. An essential GTPase that binds both GDP and GTP, with rapid nucleotide exchange. Plays a role in 16S rRNA processing and 30S ribosomal subunit biogenesis and possibly also in cell cycle regulation and energy metabolism. The protein is GTPase Era of Clostridium botulinum (strain Alaska E43 / Type E3).